A 489-amino-acid chain; its full sequence is Adenosylhomocysteinase (489 aa).

Substrate contacts are provided by T68, D151, and E213. 214–216 contributes to the NAD(+) binding site; the sequence is TTT. Residues K243 and D247 each coordinate substrate. NAD(+)-binding positions include N248, 277 to 282, E300, N335, 356 to 358, and N403; these read GYGDVG and IGH.

It belongs to the adenosylhomocysteinase family. NAD(+) serves as cofactor.

Its subcellular location is the cytoplasm. It catalyses the reaction S-adenosyl-L-homocysteine + H2O = L-homocysteine + adenosine. It participates in amino-acid biosynthesis; L-homocysteine biosynthesis; L-homocysteine from S-adenosyl-L-homocysteine: step 1/1. In terms of biological role, may play a key role in the regulation of the intracellular concentration of adenosylhomocysteine. The chain is Adenosylhomocysteinase from Mycobacterium sp. (strain KMS).